We begin with the raw amino-acid sequence, 340 residues long: MSEKNAYAKSGVDVEAGYEVVERIKKHVARTERAGVMGVLGGFGGMFDLSKTGVKEPVLVSGTDGVGTKLMLAIKYDKHDTIGQDCVAMCVNDIIAAGAEPLYFLDYIATGKNNPVKLEEVVSGVAEGCVQAGVALIGGETAEMPGMYGEDDYDLAGFAVGVAEKSQIIDGSKVKEGDILLGLASSGIHSNGYSLVRRVFADYTGKELLPELEGKRLKDVLLEPTRIYVKAALPLIKEELVNGIGHITGGGFIENVPRMFADDLAAEIDEDKVPVLPIFKALEKYGDIKHEEMFEIFNMGVGLMLAVSPENVNRVKDLLDEPVYEIGRIIKKADDSVVIK.

The protein belongs to the AIR synthase family.

Its subcellular location is the cytoplasm. The catalysed reaction is 2-formamido-N(1)-(5-O-phospho-beta-D-ribosyl)acetamidine + ATP = 5-amino-1-(5-phospho-beta-D-ribosyl)imidazole + ADP + phosphate + H(+). Its pathway is purine metabolism; IMP biosynthesis via de novo pathway; 5-amino-1-(5-phospho-D-ribosyl)imidazole from N(2)-formyl-N(1)-(5-phospho-D-ribosyl)glycinamide: step 2/2. This is Phosphoribosylformylglycinamidine cyclo-ligase from Streptococcus pyogenes serotype M6 (strain ATCC BAA-946 / MGAS10394).